A 262-amino-acid polypeptide reads, in one-letter code: Ribose-5-phosphate isomerase A (262 aa).

Residues 33 to 36, 89 to 92, and 102 to 105 contribute to the substrate site; these read TGST, DGAD, and KGGG. Catalysis depends on glutamate 111, which acts as the Proton acceptor. Position 129 (lysine 129) interacts with substrate.

Belongs to the ribose 5-phosphate isomerase family. Homodimer.

It catalyses the reaction aldehydo-D-ribose 5-phosphate = D-ribulose 5-phosphate. It functions in the pathway carbohydrate degradation; pentose phosphate pathway; D-ribose 5-phosphate from D-ribulose 5-phosphate (non-oxidative stage): step 1/1. Its function is as follows. Catalyzes the reversible conversion of ribose-5-phosphate to ribulose 5-phosphate. The sequence is that of Ribose-5-phosphate isomerase A from Cereibacter sphaeroides (strain ATCC 17029 / ATH 2.4.9) (Rhodobacter sphaeroides).